A 335-amino-acid polypeptide reads, in one-letter code: Fructose-1,6-bisphosphatase class 1 (335 aa).

4 residues coordinate Mg(2+): Glu92, Asp115, Leu117, and Asp118. Residues 118-121 (DGSS), Asn211, Tyr244, 262-264 (YLY), and Lys274 contribute to the substrate site. Residue Glu280 participates in Mg(2+) binding.

The protein belongs to the FBPase class 1 family. Homotetramer. Mg(2+) is required as a cofactor.

It localises to the cytoplasm. The enzyme catalyses beta-D-fructose 1,6-bisphosphate + H2O = beta-D-fructose 6-phosphate + phosphate. It participates in carbohydrate biosynthesis; gluconeogenesis. This is Fructose-1,6-bisphosphatase class 1 from Teredinibacter turnerae (strain ATCC 39867 / T7901).